The chain runs to 254 residues: Protein Thf1 (254 aa).

Residues 182-241 adopt a coiled-coil conformation; that stretch reads EEKMKKDLDLYRSNLEKMNQVLEVLEDALAVERQRREKAEAEAKAKTAEATVATETNDEQ. Basic and acidic residues predominate over residues 215 to 228; the sequence is QRREKAEAEAKAKT. The disordered stretch occupies residues 215–254; the sequence is QRREKAEAEAKAKTAEATVATETNDEQDEQKETSESGSDA.

This sequence belongs to the THF1 family.

Its function is as follows. May be involved in photosynthetic membrane biogenesis. This is Protein Thf1 from Picosynechococcus sp. (strain ATCC 27264 / PCC 7002 / PR-6) (Agmenellum quadruplicatum).